Here is a 202-residue protein sequence, read N- to C-terminus: LexA repressor 1 (202 aa).

Residues 28 to 48 constitute a DNA-binding region (H-T-H motif); that stretch reads RAEIAQELGFKSPNAAEEHLK. Catalysis depends on for autocatalytic cleavage activity residues serine 123 and lysine 160.

Belongs to the peptidase S24 family. In terms of assembly, homodimer.

It catalyses the reaction Hydrolysis of Ala-|-Gly bond in repressor LexA.. Functionally, represses a number of genes involved in the response to DNA damage (SOS response), including recA and lexA. In the presence of single-stranded DNA, RecA interacts with LexA causing an autocatalytic cleavage which disrupts the DNA-binding part of LexA, leading to derepression of the SOS regulon and eventually DNA repair. This Pseudomonas syringae pv. tomato (strain ATCC BAA-871 / DC3000) protein is LexA repressor 1.